A 245-amino-acid chain; its full sequence is Malonyl-[acyl-carrier protein] O-methyltransferase (245 aa).

It belongs to the methyltransferase superfamily.

It carries out the reaction malonyl-[ACP] + S-adenosyl-L-methionine = malonyl-[ACP] methyl ester + S-adenosyl-L-homocysteine. It functions in the pathway cofactor biosynthesis; biotin biosynthesis. Functionally, converts the free carboxyl group of a malonyl-thioester to its methyl ester by transfer of a methyl group from S-adenosyl-L-methionine (SAM). It allows to synthesize pimeloyl-ACP via the fatty acid synthetic pathway. The sequence is that of Malonyl-[acyl-carrier protein] O-methyltransferase from Calditerrivibrio nitroreducens (strain DSM 19672 / NBRC 101217 / Yu37-1).